Consider the following 251-residue polypeptide: 5-oxoprolinase subunit A (251 aa).

Belongs to the LamB/PxpA family. Forms a complex composed of PxpA, PxpB and PxpC.

It carries out the reaction 5-oxo-L-proline + ATP + 2 H2O = L-glutamate + ADP + phosphate + H(+). In terms of biological role, catalyzes the cleavage of 5-oxoproline to form L-glutamate coupled to the hydrolysis of ATP to ADP and inorganic phosphate. This chain is 5-oxoprolinase subunit A, found in Vibrio campbellii (strain ATCC BAA-1116).